Here is a 199-residue protein sequence, read N- to C-terminus: Molybdenum cofactor guanylyltransferase (199 aa).

GTP is bound by residues 12 to 14 (LAG), Lys25, Asn53, Asp71, and Asp101. Position 101 (Asp101) interacts with Mg(2+).

Belongs to the MobA family. Monomer. Mg(2+) is required as a cofactor.

It localises to the cytoplasm. The enzyme catalyses Mo-molybdopterin + GTP + H(+) = Mo-molybdopterin guanine dinucleotide + diphosphate. Transfers a GMP moiety from GTP to Mo-molybdopterin (Mo-MPT) cofactor (Moco or molybdenum cofactor) to form Mo-molybdopterin guanine dinucleotide (Mo-MGD) cofactor. This Cupriavidus taiwanensis (strain DSM 17343 / BCRC 17206 / CCUG 44338 / CIP 107171 / LMG 19424 / R1) (Ralstonia taiwanensis (strain LMG 19424)) protein is Molybdenum cofactor guanylyltransferase.